The sequence spans 345 residues: L-threonine 3-dehydrogenase (345 aa).

A Zn(2+)-binding site is contributed by Cys39. Residues Thr41 and His44 each act as charge relay system in the active site. His64, Glu65, Cys94, Cys97, Cys100, and Cys108 together coordinate Zn(2+). Residues Ile176, Asp196, Arg201, Leu263–Ile265, and Val287–Tyr288 contribute to the NAD(+) site.

Belongs to the zinc-containing alcohol dehydrogenase family. As to quaternary structure, homotetramer. Requires Zn(2+) as cofactor.

The protein resides in the cytoplasm. It catalyses the reaction L-threonine + NAD(+) = (2S)-2-amino-3-oxobutanoate + NADH + H(+). It functions in the pathway amino-acid degradation; L-threonine degradation via oxydo-reductase pathway; glycine from L-threonine: step 1/2. Functionally, catalyzes the NAD(+)-dependent oxidation of L-threonine to 2-amino-3-ketobutyrate. This chain is L-threonine 3-dehydrogenase, found in Anaeromyxobacter dehalogenans (strain 2CP-1 / ATCC BAA-258).